The sequence spans 144 residues: Large ribosomal subunit protein uL15 (144 aa).

The segment at 1–57 (MRLNTLSPAPGSKPSAKRVGRGIGSGLGKTCGRGHKGQKSRSGGSVRPGFEGGQMPL) is disordered. Residues 21-31 (RGIGSGLGKTC) show a composition bias toward gly residues.

Belongs to the universal ribosomal protein uL15 family. As to quaternary structure, part of the 50S ribosomal subunit.

Functionally, binds to the 23S rRNA. The polypeptide is Large ribosomal subunit protein uL15 (Photobacterium profundum (strain SS9)).